We begin with the raw amino-acid sequence, 502 residues long: T-complex protein 11-like X-linked protein 2 (502 aa).

Residues 1 to 36 (MPKTEETVLQNDPSVAENGAPEPKTPGQSQKSKSFC) form a disordered region.

Belongs to the TCP11 family.

This Homo sapiens (Human) protein is T-complex protein 11-like X-linked protein 2.